The chain runs to 64 residues: Large ribosomal subunit protein bL35 (64 aa).

Belongs to the bacterial ribosomal protein bL35 family.

This Kineococcus radiotolerans (strain ATCC BAA-149 / DSM 14245 / SRS30216) protein is Large ribosomal subunit protein bL35.